The sequence spans 162 residues: UPF0114 protein PA4574 (162 aa).

3 helical membrane passes run 10–32 (YASR…ALTI), 53–75 (LILV…MVMI), and 136–156 (LMWY…MGYL).

This sequence belongs to the UPF0114 family.

It is found in the cell membrane. The sequence is that of UPF0114 protein PA4574 from Pseudomonas aeruginosa (strain ATCC 15692 / DSM 22644 / CIP 104116 / JCM 14847 / LMG 12228 / 1C / PRS 101 / PAO1).